The following is a 159-amino-acid chain: Ribosomal RNA large subunit methyltransferase H (159 aa).

S-adenosyl-L-methionine-binding positions include Leu76, Gly108, and 127 to 132 (LSRLTF).

It belongs to the RNA methyltransferase RlmH family. Homodimer.

The protein localises to the cytoplasm. It catalyses the reaction pseudouridine(1915) in 23S rRNA + S-adenosyl-L-methionine = N(3)-methylpseudouridine(1915) in 23S rRNA + S-adenosyl-L-homocysteine + H(+). In terms of biological role, specifically methylates the pseudouridine at position 1915 (m3Psi1915) in 23S rRNA. The sequence is that of Ribosomal RNA large subunit methyltransferase H from Syntrophomonas wolfei subsp. wolfei (strain DSM 2245B / Goettingen).